Reading from the N-terminus, the 214-residue chain is Large ribosomal subunit protein uL16-like (214 aa).

The protein belongs to the universal ribosomal protein uL16 family. As to quaternary structure, component of the 60S large ribosomal subunit (LSU).

Its subcellular location is the cytoplasm. Its function is as follows. Testis-specific component of the ribosome, which is required for the transition from prophase to metaphase in male meiosis I. Compensates for the inactivated X-linked RPL10 paralog during spermatogenesis. The ribosome is a large ribonucleoprotein complex responsible for the synthesis of proteins in the cell. The small ribosomal subunit (SSU) binds messenger RNAs (mRNAs) and translates the encoded message by selecting cognate aminoacyl-transfer RNA (tRNA) molecules. The large subunit (LSU) contains the ribosomal catalytic site termed the peptidyl transferase center (PTC), which catalyzes the formation of peptide bonds, thereby polymerizing the amino acids delivered by tRNAs into a polypeptide chain. The nascent polypeptides leave the ribosome through a tunnel in the LSU and interact with protein factors that function in enzymatic processing, targeting, and the membrane insertion of nascent chains at the exit of the ribosomal tunnel. The sequence is that of Large ribosomal subunit protein uL16-like (RPL10L) from Bos taurus (Bovine).